The following is a 777-amino-acid chain: B3 domain-containing protein REM-like 1 (777 aa).

The segment at residues 97 to 193 (FVTFTLAPVD…TPVLSLCFEE (97 aa)) is a DNA-binding region (TF-B3 1). Disordered stretches follow at residues 200–248 (VGEE…TSPS) and 344–391 (KSSS…ESSS). Over residues 218 to 243 (KIVKDDNNKDESSTWKREGNHLRCKD) the composition is skewed to basic and acidic residues. A DNA-binding region (TF-B3 2) is located at residues 252–347 (TLTVTITPDS…TPVLSIKSSS (96 aa)). Polar residues predominate over residues 344 to 368 (KSSSGKGQSEFSKESLSIKPSSGNM). Residues 370–388 (KKVENNREASRKYPPRSRE) are compositionally biased toward basic and acidic residues. 2 consecutive DNA-binding regions (TF-B3) follow at residues 582–676 (FLTL…RDSS) and 683–777 (FLTL…FYTK).

The protein localises to the nucleus. The chain is B3 domain-containing protein REM-like 1 from Arabidopsis thaliana (Mouse-ear cress).